The sequence spans 360 residues: NAD(P)H-quinone oxidoreductase subunit 1, chloroplastic (360 aa).

A run of 8 helical transmembrane segments spans residues 27–47 (IWIF…VLVI), 98–118 (FSIG…IIPF), 129–149 (IGIF…LMSG), 165–185 (AAQS…ISLL), 203–223 (FWGW…ISSL), 253–273 (FGLF…FVTV), 297–317 (IFGT…FLFI), and 340–360 (FLLP…LFSL).

The protein belongs to the complex I subunit 1 family. NDH is composed of at least 16 different subunits, 5 of which are encoded in the nucleus.

It is found in the plastid. Its subcellular location is the chloroplast thylakoid membrane. The catalysed reaction is a plastoquinone + NADH + (n+1) H(+)(in) = a plastoquinol + NAD(+) + n H(+)(out). It catalyses the reaction a plastoquinone + NADPH + (n+1) H(+)(in) = a plastoquinol + NADP(+) + n H(+)(out). Its function is as follows. NDH shuttles electrons from NAD(P)H:plastoquinone, via FMN and iron-sulfur (Fe-S) centers, to quinones in the photosynthetic chain and possibly in a chloroplast respiratory chain. The immediate electron acceptor for the enzyme in this species is believed to be plastoquinone. Couples the redox reaction to proton translocation, and thus conserves the redox energy in a proton gradient. In Lobularia maritima (Sweet alyssum), this protein is NAD(P)H-quinone oxidoreductase subunit 1, chloroplastic.